Here is a 121-residue protein sequence, read N- to C-terminus: Small ribosomal subunit protein uS11 (121 aa).

Belongs to the universal ribosomal protein uS11 family. In terms of assembly, part of the 30S ribosomal subunit. Interacts with proteins S7 and S18. Binds to IF-3.

Located on the platform of the 30S subunit, it bridges several disparate RNA helices of the 16S rRNA. Forms part of the Shine-Dalgarno cleft in the 70S ribosome. The protein is Small ribosomal subunit protein uS11 of Mycoplasma pneumoniae (strain ATCC 29342 / M129 / Subtype 1) (Mycoplasmoides pneumoniae).